A 392-amino-acid polypeptide reads, in one-letter code: Protein FAM53C (392 aa).

Methionine 1 carries the N-acetylmethionine modification. Residues 78 to 119 (LRPPSRGNSPKEQPFSQVLRPEPPDPEKLPVPPAPPSKRHCR) are disordered. The segment covering 83–93 (RGNSPKEQPFS) has biased composition (polar residues). A phosphoserine mark is found at serine 122, serine 162, serine 232, serine 234, serine 255, and serine 273. Disordered regions lie at residues 141 to 167 (LWTPIKHRGSGGGGGPQVPHQSPPKRV) and 204 to 294 (RPCA…EDPR). The span at 241-256 (ASRFLPSARSSPASSP) shows a compositional bias: low complexity. Residues 278-294 (LDARKTGVKRRHEEDPR) are compositionally biased toward basic and acidic residues. A Phosphoserine modification is found at serine 299. The segment at 341 to 364 (ASCSPTGGSSQVLSESEEEEEGAV) is disordered.

This sequence belongs to the FAM53 family.

The protein is Protein FAM53C of Homo sapiens (Human).